We begin with the raw amino-acid sequence, 311 residues long: L-lactate dehydrogenase 2 (311 aa).

Residues V14, D35, and R40 each contribute to the NAD(+) site. R90 contacts substrate. Residues S103, 120–122 (ATN), and T145 each bind NAD(+). 122–125 (NPCD) provides a ligand contact to substrate. 150 to 153 (DTTR) serves as a coordination point for substrate. H177 serves as the catalytic Proton acceptor. T230 contributes to the substrate binding site.

This sequence belongs to the LDH/MDH superfamily. LDH family. Homotetramer.

It localises to the cytoplasm. The enzyme catalyses (S)-lactate + NAD(+) = pyruvate + NADH + H(+). Its pathway is fermentation; pyruvate fermentation to lactate; (S)-lactate from pyruvate: step 1/1. Its function is as follows. Catalyzes the conversion of lactate to pyruvate. The sequence is that of L-lactate dehydrogenase 2 from Listeria innocua serovar 6a (strain ATCC BAA-680 / CLIP 11262).